The sequence spans 575 residues: UvrABC system protein C (575 aa).

Residues 16 to 94 (SQPGVYRMYD…IKLYQPRYNV (79 aa)) form the GIY-YIG domain. In terms of domain architecture, UVR spans 204 to 239 (DQVLTQLISRMETASQNLEFEEAARIRDQIQAVRRV).

The protein belongs to the UvrC family. In terms of assembly, interacts with UvrB in an incision complex.

Its subcellular location is the cytoplasm. Its function is as follows. The UvrABC repair system catalyzes the recognition and processing of DNA lesions. UvrC both incises the 5' and 3' sides of the lesion. The N-terminal half is responsible for the 3' incision and the C-terminal half is responsible for the 5' incision. This Shigella dysenteriae serotype 1 (strain Sd197) protein is UvrABC system protein C.